The chain runs to 87 residues: Prolactin-releasing peptide (87 aa).

Residues 1 to 22 (MKVLRAWLLCLLMLGLALRGAA) form the signal peptide. A Phenylalanine amide modification is found at Phe53. The propeptide occupies 58-87 (ATLGDVPKPGLRPRLTCFPLEGGAMSSQDG).

As to expression, medulla oblongata and hypothalamus.

The protein resides in the secreted. Its function is as follows. Stimulates prolactin (PRL) release and regulates the expression of prolactin through its receptor GPR10. May stimulate lactotrophs directly to secrete PRL. The polypeptide is Prolactin-releasing peptide (PRLH) (Homo sapiens (Human)).